Consider the following 450-residue polypeptide: Ig mu chain C region (450 aa).

This chain is Ig mu chain C region, found in Canis lupus familiaris (Dog).